A 409-amino-acid chain; its full sequence is Peptidase T (409 aa).

His78 is a binding site for Zn(2+). Asp80 is an active-site residue. Asp140 lines the Zn(2+) pocket. Glu173 acts as the Proton acceptor in catalysis. Zn(2+)-binding residues include Glu174, Asp196, and His379.

This sequence belongs to the peptidase M20B family. Zn(2+) is required as a cofactor.

The protein localises to the cytoplasm. The catalysed reaction is Release of the N-terminal residue from a tripeptide.. In terms of biological role, cleaves the N-terminal amino acid of tripeptides. In Salmonella dublin (strain CT_02021853), this protein is Peptidase T.